The following is a 199-amino-acid chain: MTVVVDYEMGNLLSVTKALEELGYKPSVTSDPRKILEEDLVVLPGVGAFRDAVRNLKEKGLFLALKERASLNRPILGICLGMQLFFTKSYEDGEYEGLDLIPGEVVRFQKAPKIPHMGWNNLVPVDTTHELFKNLPDYYVYFVHSYYAQTDSRYVLAYTEYGEKFPAAVRRGSIIGFQFHPEKSGPVGRQILKNLREML.

Residues 1–199 (MTVVVDYEMG…QILKNLREML (199 aa)) form the Glutamine amidotransferase type-1 domain. C79 acts as the Nucleophile in catalysis. Catalysis depends on residues H180 and E182.

In terms of assembly, heterodimer of HisH and HisF.

It localises to the cytoplasm. It carries out the reaction 5-[(5-phospho-1-deoxy-D-ribulos-1-ylimino)methylamino]-1-(5-phospho-beta-D-ribosyl)imidazole-4-carboxamide + L-glutamine = D-erythro-1-(imidazol-4-yl)glycerol 3-phosphate + 5-amino-1-(5-phospho-beta-D-ribosyl)imidazole-4-carboxamide + L-glutamate + H(+). It catalyses the reaction L-glutamine + H2O = L-glutamate + NH4(+). It participates in amino-acid biosynthesis; L-histidine biosynthesis; L-histidine from 5-phospho-alpha-D-ribose 1-diphosphate: step 5/9. Its function is as follows. IGPS catalyzes the conversion of PRFAR and glutamine to IGP, AICAR and glutamate. The HisH subunit catalyzes the hydrolysis of glutamine to glutamate and ammonia as part of the synthesis of IGP and AICAR. The resulting ammonia molecule is channeled to the active site of HisF. This chain is Imidazole glycerol phosphate synthase subunit HisH, found in Carboxydothermus hydrogenoformans (strain ATCC BAA-161 / DSM 6008 / Z-2901).